Here is a 541-residue protein sequence, read N- to C-terminus: Myrosinase 1 (541 aa).

An N-terminal signal peptide occupies residues 1–19; it reads MKLLMLAFVFLLALATCKG. 3 cysteine pairs are disulfide-bonded: cysteine 24–cysteine 449, cysteine 32–cysteine 445, and cysteine 224–cysteine 232. An N-linked (GlcNAc...) asparagine glycan is attached at asparagine 33. Glutamine 57 contacts a beta-D-glucoside. Asparagine 108 is a glycosylation site (N-linked (GlcNAc...) asparagine). Histidine 159 contributes to the a beta-D-glucoside binding site. The N-linked (GlcNAc...) asparagine glycan is linked to asparagine 175. Position 204 to 205 (204 to 205) interacts with a beta-D-glucoside; that stretch reads NQ. Residue asparagine 236 is glycosylated (N-linked (GlcNAc...) asparagine). Tyrosine 348 provides a ligand contact to a beta-D-glucoside. Asparagine 356 and asparagine 379 each carry an N-linked (GlcNAc...) asparagine glycan. Residues glutamate 420, tryptophan 468, 475–476, and phenylalanine 484 contribute to the a beta-D-glucoside site; that span reads EF. The Nucleophile role is filled by glutamate 420. Residues asparagine 493 and asparagine 512 are each glycosylated (N-linked (GlcNAc...) asparagine).

It belongs to the glycosyl hydrolase 1 family. In terms of assembly, homodimer. Expressed in guard cells, phloem-associated cells and myrosin cells.

The protein resides in the vacuole. The enzyme catalyses a thioglucoside + H2O = a sugar + a thiol.. It carries out the reaction Hydrolysis of terminal, non-reducing beta-D-glucosyl residues with release of beta-D-glucose.. In terms of biological role, degradation of glucosinolates (glucose residue linked by a thioglucoside bound to an amino acid derivative) to glucose, sulfate and any of the products: thiocyanates, isothiocyanates, nitriles, epithionitriles or oxazolidine-2-thiones. These toxic degradation products can deter insect herbivores. Seems to function in abscisic acid (ABA) and methyl jasmonate (MeJA) signaling in guard cells. Functionally redundant with TGG2. Hydrolyzes sinigrin and, with lower efficiency, p-nitrophenyl beta-D-glucoside. In Arabidopsis thaliana (Mouse-ear cress), this protein is Myrosinase 1.